We begin with the raw amino-acid sequence, 293 residues long: Urease accessory protein UreD (293 aa).

The segment at 1-22 (MAVAQQAWSPGADPAPSAAPVS) is disordered. Positions 7–22 (AWSPGADPAPSAAPVS) are enriched in low complexity.

It belongs to the UreD family. In terms of assembly, ureD, UreF and UreG form a complex that acts as a GTP-hydrolysis-dependent molecular chaperone, activating the urease apoprotein by helping to assemble the nickel containing metallocenter of UreC. The UreE protein probably delivers the nickel.

The protein localises to the cytoplasm. Functionally, required for maturation of urease via the functional incorporation of the urease nickel metallocenter. This Alkalilimnicola ehrlichii (strain ATCC BAA-1101 / DSM 17681 / MLHE-1) protein is Urease accessory protein UreD.